Consider the following 268-residue polypeptide: uncharacterized protein (268 aa).

The N-terminal stretch at 1 to 18 (MRGFLLLSLGVFSFSALA) is a signal peptide. Domain regions lie at residues 24–184 (SHDL…ELLP) and 185–268 (SPAT…NWLR). An intrachain disulfide couples C110 to C115.

As to quaternary structure, monomer.

Its subcellular location is the periplasm. This is an uncharacterized protein from Pseudomonas aeruginosa (strain ATCC 15692 / DSM 22644 / CIP 104116 / JCM 14847 / LMG 12228 / 1C / PRS 101 / PAO1).